A 39-amino-acid polypeptide reads, in one-letter code: MDRNPNPNNLPVELNRTSLYLGLLLVFVTGVLFSSYFFN.

A helical transmembrane segment spans residues Ser-18–Phe-38.

Belongs to the PsbL family. As to quaternary structure, PSII is composed of 1 copy each of membrane proteins PsbA, PsbB, PsbC, PsbD, PsbE, PsbF, PsbH, PsbI, PsbJ, PsbK, PsbL, PsbM, PsbT, PsbX, PsbY, PsbZ, Psb30/Ycf12, peripheral proteins PsbO, CyanoQ (PsbQ), PsbU, PsbV and a large number of cofactors. It forms dimeric complexes.

The protein resides in the cellular thylakoid membrane. Functionally, one of the components of the core complex of photosystem II (PSII). PSII is a light-driven water:plastoquinone oxidoreductase that uses light energy to abstract electrons from H(2)O, generating O(2) and a proton gradient subsequently used for ATP formation. It consists of a core antenna complex that captures photons, and an electron transfer chain that converts photonic excitation into a charge separation. This subunit is found at the monomer-monomer interface and is required for correct PSII assembly and/or dimerization. This is Photosystem II reaction center protein L from Synechococcus sp. (strain RCC307).